Reading from the N-terminus, the 312-residue chain is Ribosomal RNA small subunit methyltransferase H (312 aa).

S-adenosyl-L-methionine contacts are provided by residues 34 to 36 (AGH), D54, F81, D102, and Q109.

This sequence belongs to the methyltransferase superfamily. RsmH family.

The protein localises to the cytoplasm. The enzyme catalyses cytidine(1402) in 16S rRNA + S-adenosyl-L-methionine = N(4)-methylcytidine(1402) in 16S rRNA + S-adenosyl-L-homocysteine + H(+). In terms of biological role, specifically methylates the N4 position of cytidine in position 1402 (C1402) of 16S rRNA. This Geobacter sp. (strain M21) protein is Ribosomal RNA small subunit methyltransferase H.